The primary structure comprises 238 residues: Uridylate kinase (238 aa).

ATP is bound at residue 12–15 (KLSG). UMP is bound at residue Gly-54. The ATP site is built by Gly-55 and Arg-59. Residues Asp-74 and 135–142 (VGAPYFTT) each bind UMP. ATP-binding residues include Thr-162, Tyr-168, and Asp-171.

The protein belongs to the UMP kinase family. In terms of assembly, homohexamer.

It is found in the cytoplasm. The enzyme catalyses UMP + ATP = UDP + ADP. It functions in the pathway pyrimidine metabolism; CTP biosynthesis via de novo pathway; UDP from UMP (UMPK route): step 1/1. With respect to regulation, inhibited by UTP. Its function is as follows. Catalyzes the reversible phosphorylation of UMP to UDP. The sequence is that of Uridylate kinase from Erythrobacter litoralis (strain HTCC2594).